Reading from the N-terminus, the 265-residue chain is uncharacterized protein (265 aa).

The segment at 233 to 265 (STACGSDQRPTRLPRASCSSRSISGSAARPWKR) is disordered. The segment covering 247–265 (RASCSSRSISGSAARPWKR) has biased composition (low complexity).

This is an uncharacterized protein from Escherichia coli.